The following is a 262-amino-acid chain: Acyl-[acyl-carrier-protein]--UDP-N-acetylglucosamine O-acyltransferase (262 aa).

It belongs to the transferase hexapeptide repeat family. LpxA subfamily. Homotrimer.

The protein localises to the cytoplasm. The enzyme catalyses a (3R)-hydroxyacyl-[ACP] + UDP-N-acetyl-alpha-D-glucosamine = a UDP-3-O-[(3R)-3-hydroxyacyl]-N-acetyl-alpha-D-glucosamine + holo-[ACP]. It functions in the pathway glycolipid biosynthesis; lipid IV(A) biosynthesis; lipid IV(A) from (3R)-3-hydroxytetradecanoyl-[acyl-carrier-protein] and UDP-N-acetyl-alpha-D-glucosamine: step 1/6. In terms of biological role, involved in the biosynthesis of lipid A, a phosphorylated glycolipid that anchors the lipopolysaccharide to the outer membrane of the cell. This is Acyl-[acyl-carrier-protein]--UDP-N-acetylglucosamine O-acyltransferase from Vibrio cholerae serotype O1 (strain ATCC 39541 / Classical Ogawa 395 / O395).